The primary structure comprises 286 residues: Probable syntaxin-7B (286 aa).

Over methionine 1 to lysine 257 the chain is Cytoplasmic. Residues leucine 97–histidine 107 are compositionally biased toward basic and acidic residues. The interval leucine 97–asparagine 160 is disordered. Residues glutamine 114–asparagine 160 show a composition bias toward low complexity. Residues asparagine 185–alanine 247 form the t-SNARE coiled-coil homology domain. A helical; Anchor for type IV membrane protein transmembrane segment spans residues methionine 258–isoleucine 278. Residues tyrosine 279–lysine 286 are Vesicular-facing.

This sequence belongs to the syntaxin family.

It localises to the membrane. In Dictyostelium discoideum (Social amoeba), this protein is Probable syntaxin-7B (syn7B).